The primary structure comprises 471 residues: Microtubule-associated tyrosine carboxypeptidase 1 (471 aa).

Disordered regions lie at residues 1–40 (MVLDSGAQAYDQAPPSPPTSPPSLRHRLKPSDRDGPPLYP) and 76–116 (HMRR…LRPA). Histidine 280 lines the Zn(2+) pocket. Catalysis depends on glutamate 281, which acts as the Nucleophile. Residues histidine 285 and glutamate 316 each contribute to the Zn(2+) site.

Belongs to the peptidase MATCAP family. Zn(2+) serves as cofactor.

The protein resides in the cytoplasm. The protein localises to the cytoskeleton. The enzyme catalyses C-terminal L-alpha-aminoacyl-L-glutamyl-L-glutamyl-L-tyrosyl-[tubulin] + H2O = C-terminal L-alpha-aminoacyl-L-glutamyl-L-glutamyl-[tubulin] + L-tyrosine. It catalyses the reaction C-terminal L-alpha-aminoacyl-L-glutamyl-L-glutamyl-L-phenylalanyl-[tubulin] + H2O = C-terminal L-alpha-aminoacyl-L-glutamyl-L-glutamyl-[tubulin] + L-phenylalanine. Its function is as follows. Tyrosine carboxypeptidase that removes the C-terminal tyrosine residue of alpha-tubulin, thereby regulating microtubule dynamics and function. Also able to remove the C-terminal phenylalanine residue of alpha-tubulin TUBA8. Recognizes adjacent tubulin dimers along the same protofilament. The sequence is that of Microtubule-associated tyrosine carboxypeptidase 1 from Homo sapiens (Human).